Consider the following 344-residue polypeptide: Gas vesicle ATPase GvpN2 (344 aa).

Residues 1–55 are disordered; sequence MTDTSRNRKVRGSKIRSSRSDKRQSRGSEDKELKRLADARDTDSEQAGDRVGDAF. Residues 7-17 show a composition bias toward basic residues; that stretch reads NRKVRGSKIRS. Basic and acidic residues predominate over residues 18–52; the sequence is SRSDKRQSRGSEDKELKRLADARDTDSEQAGDRVG. Position 89-96 (89-96) interacts with ATP; sequence GPTGCGKT.

Belongs to the CbbQ/NirQ/NorQ/GpvN family. Forms homodimers, a GvpN-GvpO heterodimer, interacts with GvpC and GvpL, might interact with GvpA.

It localises to the gas vesicle. The protein localises to the cytoplasm. The catalysed reaction is ATP + H2O = ADP + phosphate + H(+). Its function is as follows. An ATPase that functions in gas vesicle formation. A minor component of the gas vesicle, also found in soluble extracts. Gas vesicles are hollow, gas filled proteinaceous nanostructures found in several microbial planktonic microorganisms. They allow positioning of halobacteria at the optimal depth for growth in the poorly aerated, shallow brine pools of their habitat. In terms of biological role, expression of 2 c-vac DNA fragments containing 2 divergently transcribed regions (gvpE-gvpF-gvpG-gvpH-gvpI-gvpJ-gvpK-gvpL-gvpM and gvpA-gvpC-gvpN-gvpO) allows H.volcanii to produce gas vesicles. In Halobacterium salinarum (strain ATCC 700922 / JCM 11081 / NRC-1) (Halobacterium halobium), this protein is Gas vesicle ATPase GvpN2.